The following is a 158-amino-acid chain: Ribosome maturation factor RimP (158 aa).

The protein belongs to the RimP family.

It is found in the cytoplasm. In terms of biological role, required for maturation of 30S ribosomal subunits. The chain is Ribosome maturation factor RimP from Pediococcus pentosaceus (strain ATCC 25745 / CCUG 21536 / LMG 10740 / 183-1w).